A 211-amino-acid chain; its full sequence is Probable endopeptidase cgR_2070 (211 aa).

The first 35 residues, 1–35 (MGKHRRNNSNATRKAVAASAVALGATAAIASPAQA), serve as a signal peptide directing secretion. Residues 97–211 (ASTGQAIVDA…YMPFHSAVRF (115 aa)) enclose the NlpC/P60 domain. Residue Cys127 is the Nucleophile of the active site. The active-site Proton acceptor is the His175. His187 is a catalytic residue.

This sequence belongs to the peptidase C40 family.

Its subcellular location is the secreted. The protein is Probable endopeptidase cgR_2070 of Corynebacterium glutamicum (strain R).